The primary structure comprises 293 residues: LysM and putative peptidoglycan-binding domain-containing protein 4 (293 aa).

Topologically, residues 1–214 (MRQKEVLAKS…VADGADCGIQ (214 aa)) are extracellular. Residues 28 to 65 (FNNGSGDSGDSSEEESHQVVLRPRGKEHQKNSSQRPGA) are disordered. Asn-30 carries N-linked (GlcNAc...) asparagine glycosylation. Residues 71 to 115 (LQRELAQEDSLNKLALQYGCKVADIKKANNFIREQDLYALKSIKI) form the LysM domain. A helical transmembrane segment spans residues 215-235 (WWNAVFLMLLIGIVLPVFYLV). Over 236 to 293 (YFKIQATGEPSNGLNATVVPNGSMTLSPVPGQAPRLAIPVPTLPASDSQVSPTTQAGA) the chain is Cytoplasmic.

The protein resides in the membrane. In Mus musculus (Mouse), this protein is LysM and putative peptidoglycan-binding domain-containing protein 4 (Lysmd4).